We begin with the raw amino-acid sequence, 78 residues long: Translation initiation factor IF-1, plastid (78 aa).

Positions 1–72 (MKKQDLIDME…TKGRITYRLR (72 aa)) constitute an S1-like domain.

It belongs to the IF-1 family. In terms of assembly, component of the 30S ribosomal translation pre-initiation complex which assembles on the 30S ribosome in the order IF-2 and IF-3, IF-1 and N-formylmethionyl-tRNA(fMet); mRNA recruitment can occur at any time during PIC assembly.

The protein localises to the plastid. Functionally, one of the essential components for the initiation of protein synthesis. Stabilizes the binding of IF-2 and IF-3 on the 30S subunit to which N-formylmethionyl-tRNA(fMet) subsequently binds. Helps modulate mRNA selection, yielding the 30S pre-initiation complex (PIC). Upon addition of the 50S ribosomal subunit IF-1, IF-2 and IF-3 are released leaving the mature 70S translation initiation complex. This Aneura mirabilis (Parasitic liverwort) protein is Translation initiation factor IF-1, plastid.